Consider the following 80-residue polypeptide: RNA-binding protein Hfq (80 aa).

A Sm domain is found at 10–70 (DLFLNTVRKQ…ISTIMPGQPM (61 aa)).

The protein belongs to the Hfq family. Homohexamer.

In terms of biological role, RNA chaperone that binds small regulatory RNA (sRNAs) and mRNAs to facilitate mRNA translational regulation in response to envelope stress, environmental stress and changes in metabolite concentrations. Also binds with high specificity to tRNAs. The sequence is that of RNA-binding protein Hfq from Rhizobium etli (strain CIAT 652).